The sequence spans 341 residues: L-threonine 3-dehydrogenase (341 aa).

Cys-38 contributes to the Zn(2+) binding site. Active-site charge relay system residues include Thr-40 and His-43. Positions 63, 64, 93, 96, 99, and 107 each coordinate Zn(2+). NAD(+) contacts are provided by residues Ile-175, Asp-195, Arg-200, 262–264 (LGI), and 286–287 (IY).

The protein belongs to the zinc-containing alcohol dehydrogenase family. As to quaternary structure, homotetramer. The cofactor is Zn(2+).

The protein resides in the cytoplasm. It carries out the reaction L-threonine + NAD(+) = (2S)-2-amino-3-oxobutanoate + NADH + H(+). It participates in amino-acid degradation; L-threonine degradation via oxydo-reductase pathway; glycine from L-threonine: step 1/2. Catalyzes the NAD(+)-dependent oxidation of L-threonine to 2-amino-3-ketobutyrate. The chain is L-threonine 3-dehydrogenase from Shigella boydii serotype 4 (strain Sb227).